A 156-amino-acid chain; its full sequence is Maintenance of carboxysome distribution protein B (156 aa).

The required for interaction with McdA:DNA complex stretch occupies residues 1–55 (MSNNALDRLINKQKPKVPPRNDVVSESVSNDIKTQGQQELNTSLPPSDTKATPEE). The tract at residues 1-79 (MSNNALDRLI…QKPKLSPDTF (79 aa)) is disordered. The span at 24-50 (VSESVSNDIKTQGQQELNTSLPPSDTK) shows a compositional bias: polar residues. Residues 51 to 63 (ATPEEMPTSHESE) show a composition bias toward basic and acidic residues. Residues 122–156 (PEELAQVIQLAQERLSQRKAIADYKRAKTMQERFL) adopt a coiled-coil conformation.

As to quaternary structure, homodimerizes; may exist in higher order oligomers in solution. Forms a complex with McdA:DNA. Homohexamerizes, interacts with shell components of the carboxysome.

The protein localises to the carboxysome. In terms of biological role, mcdA and McdB together mediate carboxysome (Cb) spacing, size, ultrastructure and probably inheritance in the cell, together they prevent Cb aggregation. McdA is an ATPase that forms dynamic gradients on the nucleoid in response to adapter protein McdB, which associates with carboxysomes. The interplay between McdA gradients on the nucleoid and McdB-bound carboxysomes result in the equal spacing of Cbs along the cell length. Stimulates the ATPase activity of McdA, causing McdA to be released from DNA. Undergoes liquid-liquid phase separation. Functionally, incorrect positioning (aggregation) of carboxysomes results in reduced CO(2) fixation by encapsulated ribulose-1,5-bisphosphate carboxylase (RuBisCO, cbbL/cbbS), which leads to slower growth. In Gloeothece citriformis (strain PCC 7424) (Cyanothece sp. (strain PCC 7424)), this protein is Maintenance of carboxysome distribution protein B.